A 442-amino-acid chain; its full sequence is Chromosomal replication initiator protein DnaA (442 aa).

The segment at 1-69 is domain I, interacts with DnaA modulators; sequence METLWDGILS…AQAGEQVIGR (69 aa). The interval 69-103 is domain II; the sequence is RPIQVDFIVSEQSEEALKPVIEREPAPAAPPANVA. A domain III, AAA+ region region spans residues 104–320; that stretch reads SLNSKYTFSR…GALIRAVAYV (217 aa). ATP is bound by residues Gly148, Gly150, Lys151, and Thr152. Residues 321-442 form a domain IV, binds dsDNA region; that stretch reads SISGLPMTVE…GNRLEADARH (122 aa).

This sequence belongs to the DnaA family. In terms of assembly, oligomerizes as a right-handed, spiral filament on DNA at oriC.

The protein localises to the cytoplasm. Functionally, plays an essential role in the initiation and regulation of chromosomal replication. ATP-DnaA binds to the origin of replication (oriC) to initiate formation of the DNA replication initiation complex once per cell cycle. Binds the DnaA box (a 9 base pair repeat at the origin) and separates the double-stranded (ds)DNA. Forms a right-handed helical filament on oriC DNA; dsDNA binds to the exterior of the filament while single-stranded (ss)DNA is stabiized in the filament's interior. The ATP-DnaA-oriC complex binds and stabilizes one strand of the AT-rich DNA unwinding element (DUE), permitting loading of DNA polymerase. After initiation quickly degrades to an ADP-DnaA complex that is not apt for DNA replication. Binds acidic phospholipids. The polypeptide is Chromosomal replication initiator protein DnaA (Gloeobacter violaceus (strain ATCC 29082 / PCC 7421)).